Here is a 78-residue protein sequence, read N- to C-terminus: U-scoloptoxin(04)-Er1a (78 aa).

The first 24 residues, 1-24, serve as a signal peptide directing secretion; sequence MTRHLIFAAVLLVCLFVCWNAIGA. A propeptide spanning residues 25-28 is cleaved from the precursor; that stretch reads QDAR.

Belongs to the scoloptoxin-04 family. Post-translationally, contains 2 disulfide bonds. As to expression, expressed by the venom gland.

Its subcellular location is the secreted. In Ethmostigmus rubripes (Giant centipede), this protein is U-scoloptoxin(04)-Er1a.